We begin with the raw amino-acid sequence, 257 residues long: MTDPLVRLEQITVAFDDRPVVDRVNLTVSRGDIVTIIGPNGAGKTTLIKTVLGIQRATSGQLSVAPGLVIGYVPQHLTLEPTLPLSVRRFMLLSGRTLADCTAALERTGVAHLLDASVHHLSGGEKQRLLLARALARKPDLLVLDEPAQGVDINGQATLYDLIRQLRDELHCGIIMISHDLHLVMAATDRVICLNQHVCCSGYPEDISQDPAFVETFGHQVAESLAVYHHHHNHRHNLHGDVVSSADAHEGCSHDHH.

Positions 6 to 221 (VRLEQITVAF…AFVETFGHQV (216 aa)) constitute an ABC transporter domain. Position 38–45 (38–45 (GPNGAGKT)) interacts with ATP.

This sequence belongs to the ABC transporter superfamily. Zinc importer (TC 3.A.1.15.5) family. In terms of assembly, the complex is composed of two ATP-binding proteins (ZnuC), two transmembrane proteins (ZnuB) and a solute-binding protein (ZnuA).

Its subcellular location is the cell inner membrane. It catalyses the reaction Zn(2+)(out) + ATP(in) + H2O(in) = Zn(2+)(in) + ADP(in) + phosphate(in) + H(+)(in). Its function is as follows. Part of the ABC transporter complex ZnuABC involved in zinc import. Responsible for energy coupling to the transport system. The sequence is that of Zinc import ATP-binding protein ZnuC from Marinobacter nauticus (strain ATCC 700491 / DSM 11845 / VT8) (Marinobacter aquaeolei).